Consider the following 418-residue polypeptide: MPIKLLMPALSPTMTEGNLARWLKKEGDKINPGEVIAEIETDKATMEVEAVDEGTLAKIIIPQGSQNVPVNSLIAVLIEEGEELSGIEEFIAKNNSNSPKKEEISKPAETIAPQNVKEENITTASDQNNIKVFASPLAKRLAKIQNVRIEEIKGSGPHGRIIKQDVLSHKGGSKALSNKIVSRNPEEYRLAPNNNIRKIIAKRLLESKQTVPHFYLSIECNVDKLLDIREDINKSFGDDKSAKISVNDFIILAVAKALQEVPNANASWGDDAIRYYNNVDISVAVAIENGLVTPIIRNADQKNIVDLSSEMKGLIKKARENKLTPEEFQGGGFTISNLGMYGIKNFNAIINPPQSCIMGVGSSSKRAIVKNDQISIATIMDVTLSADHRVVDGAVGAEFLAAFKRFIESPALMLLYTR.

The Lipoyl-binding domain occupies 2 to 78; it reads PIKLLMPALS…PVNSLIAVLI (77 aa). At Lys-43 the chain carries N6-lipoyllysine. The Peripheral subunit-binding (PSBD) domain maps to 133 to 170; it reads FASPLAKRLAKIQNVRIEEIKGSGPHGRIIKQDVLSHK. His-388 is a catalytic residue.

This sequence belongs to the 2-oxoacid dehydrogenase family. As to quaternary structure, forms a 24-polypeptide structural core with octahedral symmetry. It depends on (R)-lipoate as a cofactor.

The enzyme catalyses N(6)-[(R)-dihydrolipoyl]-L-lysyl-[protein] + acetyl-CoA = N(6)-[(R)-S(8)-acetyldihydrolipoyl]-L-lysyl-[protein] + CoA. Its function is as follows. The pyruvate dehydrogenase complex catalyzes the overall conversion of pyruvate to acetyl-CoA and CO(2). It contains multiple copies of three enzymatic components: pyruvate dehydrogenase (E1), dihydrolipoamide acetyltransferase (E2) and lipoamide dehydrogenase (E3). In Rickettsia bellii (strain RML369-C), this protein is Dihydrolipoyllysine-residue acetyltransferase component of pyruvate dehydrogenase complex (pdhC).